The chain runs to 509 residues: MDEYEAQLLVVKQALLVTSDEQQRDELIALQTNLEELLALTRGSEPEATSDTKTPETSDNIDDELQRFQSELIDLEHQQADPGEDQQRLEELRTKYNGLLGEKCSAPHEHSWGALSYHNALICGVDDELIVDKNGILDVRLRVLFTNPTHREMLPCNYFLEGECRFDEVRCRYSHGALVPGSSIKDYKAPDFHRLARNCSVLAKLQDRLWHRGRVLCVNFVEQQCRVRLDGQEHKERERDFPFEELFPLVTAEDDDLTSESEESNETDGSDAGNDSDMDDFEAARQARMVELSLFTFKPTERLGAWEQYTRGIGSKLMANMGYIHGTGLGSDGRGIVTPVSAQILPQGRSLDACMELREAANGDKDYFSVERKLKRAQRRQEAANEKAYERASKRTDVFAFLNTSVLGQGSQQTENANKKTKPNNLQQHSNKTLNVETVRIADDIRRKQRDIAKVQQSLARNATDAQLQKRLNVQLQAQKQELATLQAQETSLCKEQQTRKSKNKMFEF.

Residues 41–61 (TRGSEPEATSDTKTPETSDNI) are disordered. Positions 47–58 (EATSDTKTPETS) are enriched in polar residues. A C3H1-type zinc finger spans residues 155 to 178 (PCNYFLEGECRFDEVRCRYSHGAL). Positions 254–278 (DDDLTSESEESNETDGSDAGNDSDM) are disordered. A G-patch domain is found at 310–356 (TRGIGSKLMANMGYIHGTGLGSDGRGIVTPVSAQILPQGRSLDACME). The segment at 410-433 (GSQQTENANKKTKPNNLQQHSNKT) is disordered. A compositionally biased stretch (polar residues) spans 423 to 433 (PNNLQQHSNKT).

It is found in the nucleus. Functionally, transcription repressor. The protein is Zinc finger CCCH-type with G patch domain-containing protein of Drosophila mojavensis (Fruit fly).